The following is a 585-amino-acid chain: MNIFADFDARIKKTLQDIDLKPKDGGELDLSRIGVEPPRDASHGDIATNAAMVLSKAVGQNPRELAARIAEALKADEDVESVDVAGPGFINLRLKASYWQRELLVMLNEGTDFGRSRLGAGKKVNVEYVSANPTGPMHVGHCRGAVVGDVLANLLKFAGYDVVKEYYINDAGAQIDVLARSVMLRYREALGESIGEIPAGLYPGDYLVRVGQELAGEFGTKLLEMPEAEALAIVKDRTIDAMMAMIRADLDALNVHHDVFYSERKLHVDHARAIRNAINDLTLKGHVYKGKLPPPKGQLPEDWEDREQTLFRSTEVGDDIDRPLMKSDGSFTYFAGDVAYFKDKYDRGFNEMIYVLGADHGGYVKRLEAVARAVSDGKAKLTVLLCQLVKLFRNGEPVRMSKRAGEFITLRDVVDEVGRDPVRFMMLYRKNDAPLDFDFAKVTEQSKDNPVFYVQYASARCHSVFRQAADQLGLVDLDRVAMGSHFEKLTDESEIALVRKLAEYPRLIESAAIHQEPHRLAFYLYDLASSFHSQWNRGTENPDLRFIKVNDPDLSLARLGLVQVVSDVLTSGLTIIGADAPTEMR.

The 'HIGH' region signature appears at 131–141 (ANPTGPMHVGH).

Belongs to the class-I aminoacyl-tRNA synthetase family. Monomer.

Its subcellular location is the cytoplasm. The enzyme catalyses tRNA(Arg) + L-arginine + ATP = L-arginyl-tRNA(Arg) + AMP + diphosphate. The protein is Arginine--tRNA ligase of Brucella canis (strain ATCC 23365 / NCTC 10854 / RM-666).